The sequence spans 215 residues: MSAPSPYVWTFQPQRGTAAGASQDYSTRINWLSAGPELRGKVVQLNEARNAILMKEQESVPTPRAEANPSFWPAALIFQPRPQAIPVHPAHPDTFDAALTSNGAQLAGGAWINYKNGSVRYEAPLQLAEEQVGGPLNAFAIKHQLQLAGGALSASMSEMSGAPRIPRSGGIGSWQFSREFPPTVYLNPFSGSPDTFPHQFLSNYDSFSHTVDGYD.

Phosphothreonine; by host is present on threonine 62. A propeptide spanning residues 110–150 (AWINYKNGSVRYEAPLQLAEEQVGGPLNAFAIKHQLQLAGG) is cleaved from the precursor.

It belongs to the adenoviridae hexon-linking protein family. Interacts with the peripentonal hexons as well as the hexons in the facets. Part of a complex composed of the core-capsid bridging protein, the endosome lysis protein VI and the hexon-linking protein VIII; these interactions bridge the virus core to the capsid. In terms of processing, cleaved by the viral protease during virion maturation. May cause the middle segment to be shed from the capsid.

The protein localises to the virion. It is found in the host nucleus. Functionally, structural component of the virion that acts as a cement protein on the capsid interior and which glue the peripentonal hexons and group-of-nine hexons together. The sequence is that of Pre-hexon-linking protein VIII from Murine adenovirus A serotype 1 (MAdV-1).